The chain runs to 289 residues: 4-hydroxybenzoate octaprenyltransferase (289 aa).

Helical transmembrane passes span 21 to 40, 95 to 115, 116 to 136, 138 to 158, 161 to 181, 213 to 233, 236 to 256, and 268 to 288; these read PIGT…LAAG, VLAL…TMNS, LTIA…FMKR, IPIP…MAYA, ANAL…WTIA, IIGV…QLMG, AWYY…QRLI, and FLNN…NYLL.

The protein belongs to the UbiA prenyltransferase family. The cofactor is Mg(2+).

The protein resides in the cell inner membrane. The catalysed reaction is all-trans-octaprenyl diphosphate + 4-hydroxybenzoate = 4-hydroxy-3-(all-trans-octaprenyl)benzoate + diphosphate. It functions in the pathway cofactor biosynthesis; ubiquinone biosynthesis. Catalyzes the prenylation of para-hydroxybenzoate (PHB) with an all-trans polyprenyl group. Mediates the second step in the final reaction sequence of ubiquinone-8 (UQ-8) biosynthesis, which is the condensation of the polyisoprenoid side chain with PHB, generating the first membrane-bound Q intermediate 3-octaprenyl-4-hydroxybenzoate. This is 4-hydroxybenzoate octaprenyltransferase from Aeromonas salmonicida (strain A449).